Here is a 312-residue protein sequence, read N- to C-terminus: Methionyl-tRNA formyltransferase (312 aa).

109-112 lines the (6S)-5,6,7,8-tetrahydrofolate pocket; that stretch reads SLLP.

It belongs to the Fmt family.

It catalyses the reaction L-methionyl-tRNA(fMet) + (6R)-10-formyltetrahydrofolate = N-formyl-L-methionyl-tRNA(fMet) + (6S)-5,6,7,8-tetrahydrofolate + H(+). In terms of biological role, attaches a formyl group to the free amino group of methionyl-tRNA(fMet). The formyl group appears to play a dual role in the initiator identity of N-formylmethionyl-tRNA by promoting its recognition by IF2 and preventing the misappropriation of this tRNA by the elongation apparatus. This is Methionyl-tRNA formyltransferase from Caulobacter sp. (strain K31).